The chain runs to 33 residues: Pardaxin P-1 (33 aa).

This sequence belongs to the pardaxin family. In terms of assembly, in aqueous solution exists as a tetramer.

It localises to the secreted. The protein localises to the target cell membrane. In terms of biological role, exhibits unusual shark repellent and surfactant properties. Forms voltage-dependent, ion-permeable channels in membranes. At high concentration causes cell membrane lysis. Causes death in killfish oryzias latipes in 30 minutes at a concentration of 25 micrograms/ml. In Pardachirus pavoninus (Peacock sole), this protein is Pardaxin P-1.